A 331-amino-acid polypeptide reads, in one-letter code: 6-phosphogluconolactonase (331 aa).

The protein belongs to the cycloisomerase 2 family.

It catalyses the reaction 6-phospho-D-glucono-1,5-lactone + H2O = 6-phospho-D-gluconate + H(+). It participates in carbohydrate degradation; pentose phosphate pathway; D-ribulose 5-phosphate from D-glucose 6-phosphate (oxidative stage): step 2/3. In terms of biological role, catalyzes the hydrolysis of 6-phosphogluconolactone to 6-phosphogluconate. The sequence is that of 6-phosphogluconolactonase from Citrobacter koseri (strain ATCC BAA-895 / CDC 4225-83 / SGSC4696).